We begin with the raw amino-acid sequence, 204 residues long: Holliday junction branch migration complex subunit RuvA (204 aa).

The tract at residues 1–64 is domain I; it reads MIGRLQGILL…EDAHLLFGFA (64 aa). The tract at residues 65-143 is domain II; sequence QKTDRTLFRE…GVKQSDFFVE (79 aa). The interval 144–155 is flexible linker; the sequence is STHIPLSPSIES. Residues 156 to 204 are domain III; it reads HSESSSDEAISALIALGYKPAEAEKMVKRVAKPELTSEQVIREALKAAL.

This sequence belongs to the RuvA family. Homotetramer. Forms an RuvA(8)-RuvB(12)-Holliday junction (HJ) complex. HJ DNA is sandwiched between 2 RuvA tetramers; dsDNA enters through RuvA and exits via RuvB. An RuvB hexamer assembles on each DNA strand where it exits the tetramer. Each RuvB hexamer is contacted by two RuvA subunits (via domain III) on 2 adjacent RuvB subunits; this complex drives branch migration. In the full resolvosome a probable DNA-RuvA(4)-RuvB(12)-RuvC(2) complex forms which resolves the HJ.

The protein localises to the cytoplasm. Functionally, the RuvA-RuvB-RuvC complex processes Holliday junction (HJ) DNA during genetic recombination and DNA repair, while the RuvA-RuvB complex plays an important role in the rescue of blocked DNA replication forks via replication fork reversal (RFR). RuvA specifically binds to HJ cruciform DNA, conferring on it an open structure. The RuvB hexamer acts as an ATP-dependent pump, pulling dsDNA into and through the RuvAB complex. HJ branch migration allows RuvC to scan DNA until it finds its consensus sequence, where it cleaves and resolves the cruciform DNA. The protein is Holliday junction branch migration complex subunit RuvA of Haemophilus influenzae (strain PittGG).